Here is a 105-residue protein sequence, read N- to C-terminus: V-type ATP synthase subunit F (105 aa).

This sequence belongs to the V-ATPase F subunit family.

In terms of biological role, produces ATP from ADP in the presence of a proton gradient across the membrane. The polypeptide is V-type ATP synthase subunit F (Fusobacterium nucleatum subsp. nucleatum (strain ATCC 25586 / DSM 15643 / BCRC 10681 / CIP 101130 / JCM 8532 / KCTC 2640 / LMG 13131 / VPI 4355)).